The sequence spans 210 residues: Glutathione S-transferase P (210 aa).

Residues 2 to 81 (PPYTVVYFPV…HLGRTLGLYG (80 aa)) form the GST N-terminal domain. Y4 is modified (phosphotyrosine; by EGFR). Residues Y8, R14, W39, K45, and 52–53 (QL) each bind glutathione. T62 carries the post-translational modification Phosphothreonine. 65–66 (QS) serves as a coordination point for glutathione. The GST C-terminal domain occupies 83 to 204 (DQQEAALVDM…ASPEYVNLPI (122 aa)). N6-succinyllysine occurs at positions 103 and 116. K128 is modified (N6-acetyllysine). Y199 carries the phosphotyrosine; by EGFR modification.

It belongs to the GST superfamily. Pi family. In terms of assembly, homodimer. Interacts with CDK5.

The protein localises to the cytoplasm. Its subcellular location is the mitochondrion. It localises to the nucleus. The catalysed reaction is RX + glutathione = an S-substituted glutathione + a halide anion + H(+). It catalyses the reaction prostaglandin J2 + glutathione = prostaglandin J2-S-(R)-glutathione. The enzyme catalyses prostaglandin J2 + glutathione = prostaglandin J2-S-(S)-glutathione. It carries out the reaction prostaglandin A2 + glutathione = prostaglandin A2-S-(S)-glutathione. The catalysed reaction is 11(S)-hydroxy-14(S),15(S)-epoxy-(5Z,8Z,12E)-eicosatrienoate + glutathione = (11S,15S)-dihydroxy-14(R)-S-glutathionyl-(5Z,8Z,12E)-eicosatrienoate. Conjugation of reduced glutathione to a wide number of exogenous and endogenous hydrophobic electrophiles. Involved in the formation of glutathione conjugates of both prostaglandin A2 (PGA2) and prostaglandin J2 (PGJ2). Participates in the formation of novel hepoxilin regioisomers. Negatively regulates CDK5 activity via p25/p35 translocation to prevent neurodegeneration. The protein is Glutathione S-transferase P of Homo sapiens (Human).